Reading from the N-terminus, the 70-residue chain is ATP synthase subunit c (70 aa).

2 helical membrane passes run 4-24 and 47-67; these read IAAG…DGIV and FIGV…SLLV.

Belongs to the ATPase C chain family. As to quaternary structure, F-type ATPases have 2 components, F(1) - the catalytic core - and F(0) - the membrane proton channel. F(1) has five subunits: alpha(3), beta(3), gamma(1), delta(1), epsilon(1). F(0) has three main subunits: a(1), b(2) and c(10-14). The alpha and beta chains form an alternating ring which encloses part of the gamma chain. F(1) is attached to F(0) by a central stalk formed by the gamma and epsilon chains, while a peripheral stalk is formed by the delta and b chains.

It is found in the cell membrane. In terms of biological role, f(1)F(0) ATP synthase produces ATP from ADP in the presence of a proton or sodium gradient. F-type ATPases consist of two structural domains, F(1) containing the extramembraneous catalytic core and F(0) containing the membrane proton channel, linked together by a central stalk and a peripheral stalk. During catalysis, ATP synthesis in the catalytic domain of F(1) is coupled via a rotary mechanism of the central stalk subunits to proton translocation. Its function is as follows. Key component of the F(0) channel; it plays a direct role in translocation across the membrane. A homomeric c-ring of between 10-14 subunits forms the central stalk rotor element with the F(1) delta and epsilon subunits. The protein is ATP synthase subunit c of Pediococcus pentosaceus (strain ATCC 25745 / CCUG 21536 / LMG 10740 / 183-1w).